The following is a 398-amino-acid chain: 1-deoxy-D-xylulose 5-phosphate reductoisomerase (398 aa).

NADPH-binding residues include threonine 21, glycine 22, serine 23, isoleucine 24, glycine 47, asparagine 50, and asparagine 127. Lysine 128 contributes to the 1-deoxy-D-xylulose 5-phosphate binding site. Glutamate 129 is an NADPH binding site. Aspartate 151 serves as a coordination point for Mn(2+). Positions 152, 153, 177, and 200 each coordinate 1-deoxy-D-xylulose 5-phosphate. Residue glutamate 153 participates in Mn(2+) binding. Glycine 206 serves as a coordination point for NADPH. The 1-deoxy-D-xylulose 5-phosphate site is built by serine 213, asparagine 218, lysine 219, and glutamate 222. Glutamate 222 provides a ligand contact to Mn(2+).

Belongs to the DXR family. The cofactor is Mg(2+). It depends on Mn(2+) as a cofactor.

The catalysed reaction is 2-C-methyl-D-erythritol 4-phosphate + NADP(+) = 1-deoxy-D-xylulose 5-phosphate + NADPH + H(+). The protein operates within isoprenoid biosynthesis; isopentenyl diphosphate biosynthesis via DXP pathway; isopentenyl diphosphate from 1-deoxy-D-xylulose 5-phosphate: step 1/6. Its function is as follows. Catalyzes the NADPH-dependent rearrangement and reduction of 1-deoxy-D-xylulose-5-phosphate (DXP) to 2-C-methyl-D-erythritol 4-phosphate (MEP). The chain is 1-deoxy-D-xylulose 5-phosphate reductoisomerase from Mycolicibacterium smegmatis (strain ATCC 700084 / mc(2)155) (Mycobacterium smegmatis).